The following is a 370-amino-acid chain: Proline-rich protein 5-like (370 aa).

Phosphoserine is present on Ser-28. Residues 327–370 (PTFPPPHRQCSSEPSILDSPDEMELEDVASGSQEDSELNCASLS) are disordered.

It belongs to the PROTOR family. As to quaternary structure, interacts with the mammalian target of rapamycin complex 2 (mTORC2) which contains MTOR, MLST8, PRR5, RICTOR, MAPKAP1 and DEPTOR. Interacts with RFFL. Interacts (via C-terminus) with ZFP36 (via C-terminus); this interaction may accelerate ZFP36-mediated mRNA decay during stress. Interacts with RICTOR. Ubiquitinated. Ubiquitination by RFFL promotes proteasomal degradation of PRR5L thereby modifying the substrate-specific activity of the mTORC2 complex. Ubiquitination by RFFL is stimulated by LPA/lysophosphatidic acid.

Its function is as follows. Associates with the mTORC2 complex that regulates cellular processes including survival and organization of the cytoskeleton. Regulates the activity of the mTORC2 complex in a substrate-specific manner preventing for instance the specific phosphorylation of PKCs and thereby controlling cell migration. Plays a role in the stimulation of ZFP36-mediated mRNA decay of several ZFP36-associated mRNAs, such as TNF-alpha and GM-CSF, in response to stress. Required for ZFP36 localization to cytoplasmic stress granule (SG) and P-body (PB) in response to stress. This is Proline-rich protein 5-like (Prr5l) from Rattus norvegicus (Rat).